We begin with the raw amino-acid sequence, 342 residues long: Renalase (342 aa).

Residues 1–17 (MAQVLIVGAGMTGSLCA) form the signal peptide. FAD is bound by residues threonine 12, arginine 42, and 61-62 (QY).

The protein belongs to the renalase family. The cofactor is FAD. As to expression, secreted into the blood by the kidney. Highly expressed in the kidney, expressed at lower level in heart, skeletal muscle and small intestine. Its plasma concentration is markedly reduced in patients with end-stage renal disease, as compared with healthy subjects.

Its subcellular location is the secreted. It carries out the reaction 1,2-dihydro-beta-NAD + O2 + H(+) = H2O2 + NAD(+). The catalysed reaction is 1,2-dihydro-beta-NADP + O2 + H(+) = H2O2 + NADP(+). The enzyme catalyses 1,6-dihydro-beta-NADP + O2 + H(+) = H2O2 + NADP(+). It catalyses the reaction 1,6-dihydro-beta-NAD + O2 + H(+) = H2O2 + NAD(+). Functionally, catalyzes the oxidation of the less abundant 1,2-dihydro-beta-NAD(P) and 1,6-dihydro-beta-NAD(P) to form beta-NAD(P)(+). The enzyme hormone is secreted by the kidney, and circulates in blood and modulates cardiac function and systemic blood pressure. Lowers blood pressure in vivo by decreasing cardiac contractility and heart rate and preventing a compensatory increase in peripheral vascular tone, suggesting a causal link to the increased plasma catecholamine and heightened cardiovascular risk. High concentrations of catecholamines activate plasma renalase and promotes its secretion and synthesis. The protein is Renalase (RNLS) of Homo sapiens (Human).